An 843-amino-acid chain; its full sequence is Vacuolar membrane protease (843 aa).

Residues 1–16 (MTNSRRHIFERICAKA) lie on the Cytoplasmic side of the membrane. A helical membrane pass occupies residues 17–37 (FQSSLTCSIFGFTVLLILYLL). The Vacuolar portion of the chain corresponds to 38–347 (DWKRIAQVPG…LAFGKYWQLN (310 aa)). Residues asparagine 96, asparagine 109, and asparagine 117 are each glycosylated (N-linked (GlcNAc...) asparagine). Zn(2+) is bound by residues histidine 147 and aspartate 159. Residue glutamate 191 is the Proton acceptor of the active site. A Zn(2+)-binding site is contributed by glutamate 192. Residue asparagine 209 is glycosylated (N-linked (GlcNAc...) asparagine). Zn(2+) is bound at residue glutamate 217. Residue asparagine 275 is glycosylated (N-linked (GlcNAc...) asparagine). Position 292 (histidine 292) interacts with Zn(2+). Asparagine 322 carries an N-linked (GlcNAc...) asparagine glycan. Residues 348 to 368 (LPIYQVLNIIFAVICPIVLLL) form a helical membrane-spanning segment. At 369–386 (TLIRFPSLYEQLKKPRYT) the chain is on the cytoplasmic side. The chain crosses the membrane as a helical span at residues 387–407 (VCFVVSCIFVSIFDTLTVLLL). The Vacuolar segment spans residues 408–417 (TWINPYVINS). A helical transmembrane segment spans residues 418 to 438 (HTGLILALFYLTNLIALAFSF). Over 439 to 456 (RAAATHSKLSSEDLSSIE) the chain is Cytoplasmic. A helical membrane pass occupies residues 457–477 (IVFIWYAQILWYLVFIVSVIL). Topologically, residues 478–484 (SIYFQLG) are vacuolar. A helical transmembrane segment spans residues 485–505 (STYWVTLSYLCTFTCCIMTII). The Cytoplasmic segment spans residues 506–566 (RINYFVDNVV…NRAHVKLIDN (61 aa)). A helical transmembrane segment spans residues 567–587 (IWTVIYFIFNVPFPVFLCYDI). Topologically, residues 588 to 608 (LVETILPAGSQTLTDSVFSSK) are vacuolar. The chain crosses the membrane as a helical span at residues 609–629 (LYKLVIFVVFLSLVNSGPFIF). The Cytoplasmic portion of the chain corresponds to 630-636 (RALSKKS). The chain crosses the membrane as a helical span at residues 637–657 (LAVLTMLWITLFVQALSVNPF). Topologically, residues 658–843 (TESAPLKLSF…LLKVKSSIVI (186 aa)) are vacuolar. N-linked (GlcNAc...) asparagine glycosylation is found at asparagine 677, asparagine 703, asparagine 707, asparagine 754, and asparagine 788.

The protein belongs to the peptidase M28 family. Zn(2+) serves as cofactor.

It localises to the membrane. Its subcellular location is the vacuole membrane. Its function is as follows. May be involved in vacuolar sorting and osmoregulation. This is Vacuolar membrane protease from Schizosaccharomyces pombe (strain 972 / ATCC 24843) (Fission yeast).